We begin with the raw amino-acid sequence, 383 residues long: Arginine biosynthesis bifunctional protein ArgJ 1 (383 aa).

The disordered stretch occupies residues 1-25; the sequence is MTVTAPKGSTGGGCRRGSKESGQPD. 6 residues coordinate substrate: T146, K168, T179, E259, N378, and S383. T179 (nucleophile) is an active-site residue.

This sequence belongs to the ArgJ family. Heterotetramer of two alpha and two beta chains.

The protein localises to the cytoplasm. It catalyses the reaction N(2)-acetyl-L-ornithine + L-glutamate = N-acetyl-L-glutamate + L-ornithine. The enzyme catalyses L-glutamate + acetyl-CoA = N-acetyl-L-glutamate + CoA + H(+). The protein operates within amino-acid biosynthesis; L-arginine biosynthesis; L-ornithine and N-acetyl-L-glutamate from L-glutamate and N(2)-acetyl-L-ornithine (cyclic): step 1/1. It participates in amino-acid biosynthesis; L-arginine biosynthesis; N(2)-acetyl-L-ornithine from L-glutamate: step 1/4. Its function is as follows. Catalyzes two activities which are involved in the cyclic version of arginine biosynthesis: the synthesis of N-acetylglutamate from glutamate and acetyl-CoA as the acetyl donor, and of ornithine by transacetylation between N(2)-acetylornithine and glutamate. The sequence is that of Arginine biosynthesis bifunctional protein ArgJ 1 from Streptomyces clavuligerus.